We begin with the raw amino-acid sequence, 336 residues long: Holliday junction branch migration complex subunit RuvB (336 aa).

The segment at 1–182 is large ATPase domain (RuvB-L); sequence MKERIVNLET…FGMSFRMQFY (182 aa). ATP contacts are provided by residues Leu-21, Arg-22, Gly-63, Lys-66, Thr-67, Ser-68, 129–131, Arg-172, Tyr-182, and Arg-219; that span reads EDF. A Mg(2+)-binding site is contributed by Thr-67. The interval 183–253 is small ATPAse domain (RuvB-S); sequence SPSELSLIIK…ITLHALNELG (71 aa). The tract at residues 256 to 336 is head domain (RuvB-H); that stretch reads ELGFDEADLA…IPTLNPQTLF (81 aa). Positions 310 and 315 each coordinate DNA.

Belongs to the RuvB family. Homohexamer. Forms an RuvA(8)-RuvB(12)-Holliday junction (HJ) complex. HJ DNA is sandwiched between 2 RuvA tetramers; dsDNA enters through RuvA and exits via RuvB. An RuvB hexamer assembles on each DNA strand where it exits the tetramer. Each RuvB hexamer is contacted by two RuvA subunits (via domain III) on 2 adjacent RuvB subunits; this complex drives branch migration. In the full resolvosome a probable DNA-RuvA(4)-RuvB(12)-RuvC(2) complex forms which resolves the HJ.

The protein resides in the cytoplasm. The catalysed reaction is ATP + H2O = ADP + phosphate + H(+). Its function is as follows. The RuvA-RuvB-RuvC complex processes Holliday junction (HJ) DNA during genetic recombination and DNA repair, while the RuvA-RuvB complex plays an important role in the rescue of blocked DNA replication forks via replication fork reversal (RFR). RuvA specifically binds to HJ cruciform DNA, conferring on it an open structure. The RuvB hexamer acts as an ATP-dependent pump, pulling dsDNA into and through the RuvAB complex. RuvB forms 2 homohexamers on either side of HJ DNA bound by 1 or 2 RuvA tetramers; 4 subunits per hexamer contact DNA at a time. Coordinated motions by a converter formed by DNA-disengaged RuvB subunits stimulates ATP hydrolysis and nucleotide exchange. Immobilization of the converter enables RuvB to convert the ATP-contained energy into a lever motion, pulling 2 nucleotides of DNA out of the RuvA tetramer per ATP hydrolyzed, thus driving DNA branch migration. The RuvB motors rotate together with the DNA substrate, which together with the progressing nucleotide cycle form the mechanistic basis for DNA recombination by continuous HJ branch migration. Branch migration allows RuvC to scan DNA until it finds its consensus sequence, where it cleaves and resolves cruciform DNA. In Helicobacter pylori (strain P12), this protein is Holliday junction branch migration complex subunit RuvB.